A 901-amino-acid chain; its full sequence is MLIKLLTKVFGSRNDRTLRRMRKAVSLINAMEPEMEKLSDDELKAKTNEFRARIEKGESVESLIPEAFAVVREASKRVFGMRHFDVQLLGGMVLNDRCIAEMRTGEGKTLTATLPAYLNALSGKGVHVVTVNDYLAQRDAENNRPLFEFLGMSVGINLPGMPAPAKREAYAADITYGTNNEYGFDYLRDNMAFSPEERVQRKLHYALVDEVDSILIDEARTPLIISGPAEDSSEMYKKVNKIIPHLIRQEKEDSDTFQGEGHFSVDEKARQVNLTERGLVLIEELLVQEGIMDEGESLYSPGNIMLMHHVTAALRAHALFTRDVDYIVKDGEVIIVDEHTGRTMQGRRWSDGLHQAVEAKEGVEIQNENQTLASITFQNYFRLYEKLAGMTGTADTEAFEFSSIYKLDTVVVPTNRPMIRKDLPDLVYMTEAEKIQAIIEDIKERTANGQPVLVGTISIEKSEVVSRELTKAGIKHNVLNAKFHANEAGIVAQAGYPAAVTIATNMAGRGTDIMLGGSWQAEVAALEAPTEEQIAQIKADWQVRHDAVLAAGGLHIIGTERHESRRIDNQLRGRSGRQGDPGSSRFYLSMEDALMRIFASDRVSGMMRKLGMKPGEAIEHPWVTKAIANAQRKVESRNFDIRKQLLEYDDVANDQRRAIYTQRNELLDVSDVSDTINSIREDVFKATIDAYIPPQSLEEMWDIPGLQERLKNDFDLEMPIAEWLDKEPELHEETLRERILAQSIEVYQRKEEVVGAEMMRHFEKGVMLQTLDSLWKEHLAAMDYLRQGIHLRGYAQKDPKQEYKRESFAMFAAMLESLKYEVISTLSKVQVRMPEEVEAMEMQRREEAERLAQMQQLSHQDDDAAVAADLAAQTGERKIGRNDPCPCGSGKKYKQCHGRLS.

ATP-binding positions include Q87, 105–109, and D512; that span reads GEGKT. The Zn(2+) site is built by C885, C887, C896, and H897.

The protein belongs to the SecA family. Monomer and homodimer. Part of the essential Sec protein translocation apparatus which comprises SecA, SecYEG and auxiliary proteins SecDF-YajC and YidC. Zn(2+) is required as a cofactor.

Its subcellular location is the cell inner membrane. The protein resides in the cytoplasm. The catalysed reaction is ATP + H2O + cellular proteinSide 1 = ADP + phosphate + cellular proteinSide 2.. In terms of biological role, part of the Sec protein translocase complex. Interacts with the SecYEG preprotein conducting channel. Has a central role in coupling the hydrolysis of ATP to the transfer of proteins into and across the cell membrane, serving both as a receptor for the preprotein-SecB complex and as an ATP-driven molecular motor driving the stepwise translocation of polypeptide chains across the membrane. In Salmonella agona (strain SL483), this protein is Protein translocase subunit SecA.